Consider the following 252-residue polypeptide: 5-oxoprolinase subunit A (252 aa).

Belongs to the LamB/PxpA family. As to quaternary structure, forms a complex composed of PxpA, PxpB and PxpC.

The catalysed reaction is 5-oxo-L-proline + ATP + 2 H2O = L-glutamate + ADP + phosphate + H(+). Catalyzes the cleavage of 5-oxoproline to form L-glutamate coupled to the hydrolysis of ATP to ADP and inorganic phosphate. The chain is 5-oxoprolinase subunit A from Kocuria rhizophila (strain ATCC 9341 / DSM 348 / NBRC 103217 / DC2201).